The chain runs to 413 residues: MAKLLAMILAGGEGRRLDPLTRDRAKPAVPFGGRYRIVDFVLSNMANSGILKMKVVVQYKSESLNTHVQRAWRLTSLLNQYVELVPAQMRVGPKWFEGSADAIYQNLNIITDEEPDFTFVFGADHVYRMDARQMLAFHQDRKADLTVAAVPIPVGEASEFGIIEVDAEGRMVGFVEKPTSDPKTMPGDPTRCLASMGNYLFTTEALVQEIVRDAGDPASAHDFGKSIVASMYQRKRVYVYDFARNVVPGQTERERGYWRDVGSIDAYFQANMDLVAVDPVFSLYNDEWPIFTVQYNYPPAKFVFNNERDNRIGRATDSLISEGCIISGAHVHHSILSPKVRVNSYATVEESIVFENVNIGRHCRIRRAIIDKHVDIPAHTTIGFDHEKDRKHFHVTESGIVIIPKGMRIEAGR.

Alpha-D-glucose 1-phosphate contacts are provided by residues Gly-161, 176-177, and Ser-195; that span reads EK.

It belongs to the bacterial/plant glucose-1-phosphate adenylyltransferase family. In terms of assembly, homotetramer.

The enzyme catalyses alpha-D-glucose 1-phosphate + ATP + H(+) = ADP-alpha-D-glucose + diphosphate. The protein operates within glycan biosynthesis; glycogen biosynthesis. In terms of biological role, involved in the biosynthesis of ADP-glucose, a building block required for the elongation reactions to produce glycogen. Catalyzes the reaction between ATP and alpha-D-glucose 1-phosphate (G1P) to produce pyrophosphate and ADP-Glc. The sequence is that of Glucose-1-phosphate adenylyltransferase from Anaeromyxobacter dehalogenans (strain 2CP-C).